We begin with the raw amino-acid sequence, 198 residues long: Cytochrome c oxidase assembly protein CtaG (198 aa).

Residues 1-12 lie on the Cytoplasmic side of the membrane; the sequence is MADTGQSDRKER. Residues 13–35 form a helical; Signal-anchor for type II membrane protein membrane-spanning segment; sequence SNGVIVGTCLAFVVGMVGMAYAA. Residues 36 to 198 are Periplasmic-facing; it reads VPLYDMFCRV…QVKSRTENKL (163 aa).

Belongs to the COX11/CtaG family.

Its subcellular location is the cell inner membrane. In terms of biological role, exerts its effect at some terminal stage of cytochrome c oxidase synthesis, probably by being involved in the insertion of the copper B into subunit I. The protein is Cytochrome c oxidase assembly protein CtaG of Sinorhizobium medicae (strain WSM419) (Ensifer medicae).